A 407-amino-acid polypeptide reads, in one-letter code: 4-hydroxy-3-methylbut-2-en-1-yl diphosphate synthase (ferredoxin) (407 aa).

The [4Fe-4S] cluster site is built by C316, C319, C350, and E357.

The protein belongs to the IspG family. Requires [4Fe-4S] cluster as cofactor.

The catalysed reaction is (2E)-4-hydroxy-3-methylbut-2-enyl diphosphate + 2 oxidized [2Fe-2S]-[ferredoxin] + H2O = 2-C-methyl-D-erythritol 2,4-cyclic diphosphate + 2 reduced [2Fe-2S]-[ferredoxin] + H(+). The protein operates within isoprenoid biosynthesis; isopentenyl diphosphate biosynthesis via DXP pathway; isopentenyl diphosphate from 1-deoxy-D-xylulose 5-phosphate: step 5/6. In terms of biological role, converts 2C-methyl-D-erythritol 2,4-cyclodiphosphate (ME-2,4cPP) into 1-hydroxy-2-methyl-2-(E)-butenyl 4-diphosphate. In Cyanothece sp. (strain PCC 7425 / ATCC 29141), this protein is 4-hydroxy-3-methylbut-2-en-1-yl diphosphate synthase (ferredoxin).